Reading from the N-terminus, the 182-residue chain is Peptidyl-tRNA hydrolase (182 aa).

Tyr-14 provides a ligand contact to tRNA. His-19 acts as the Proton acceptor in catalysis. The tRNA site is built by Phe-60, Asn-62, and Asn-106.

This sequence belongs to the PTH family. In terms of assembly, monomer.

It is found in the cytoplasm. The catalysed reaction is an N-acyl-L-alpha-aminoacyl-tRNA + H2O = an N-acyl-L-amino acid + a tRNA + H(+). Hydrolyzes ribosome-free peptidyl-tRNAs (with 1 or more amino acids incorporated), which drop off the ribosome during protein synthesis, or as a result of ribosome stalling. In terms of biological role, catalyzes the release of premature peptidyl moieties from peptidyl-tRNA molecules trapped in stalled 50S ribosomal subunits, and thus maintains levels of free tRNAs and 50S ribosomes. The polypeptide is Peptidyl-tRNA hydrolase (Campylobacter concisus (strain 13826)).